Here is a 478-residue protein sequence, read N- to C-terminus: Ankyrin repeat and BTB/POZ domain-containing protein 1 (478 aa).

ANK repeat units follow at residues 1–31 (MDTS…EVNV) and 35–64 (WDST…RCEA). 2 BTB domains span residues 115 to 182 (SDVV…DIGV) and 272 to 346 (PDIC…ELPP). The stretch at 450-478 (TVQTYSAIEEAQQQLRALENLLVSIGLDC) forms a coiled coil.

Its subcellular location is the cytoplasm. Functionally, may act as a mediator of the PTEN growth-suppressive signaling pathway. May play a role in developmental processes. The chain is Ankyrin repeat and BTB/POZ domain-containing protein 1 from Rattus norvegicus (Rat).